The primary structure comprises 487 residues: Adenosylhomocysteinase (487 aa).

Positions 76, 151, and 212 each coordinate substrate. 213-215 is an NAD(+) binding site; that stretch reads TTT. Substrate is bound by residues lysine 242 and aspartate 246. NAD(+) is bound by residues asparagine 247, 276-281, glutamate 299, asparagine 334, 355-357, and asparagine 403; these read GYGDVG and IGH.

The protein belongs to the adenosylhomocysteinase family. NAD(+) serves as cofactor.

Its subcellular location is the cytoplasm. It carries out the reaction S-adenosyl-L-homocysteine + H2O = L-homocysteine + adenosine. It functions in the pathway amino-acid biosynthesis; L-homocysteine biosynthesis; L-homocysteine from S-adenosyl-L-homocysteine: step 1/1. Its function is as follows. May play a key role in the regulation of the intracellular concentration of adenosylhomocysteine. This is Adenosylhomocysteinase from Bacteroides fragilis (strain YCH46).